The primary structure comprises 578 residues: Lysine--tRNA ligase (578 aa).

Mg(2+) is bound by residues Glu414 and Glu421.

This sequence belongs to the class-II aminoacyl-tRNA synthetase family. As to quaternary structure, homodimer. Mg(2+) is required as a cofactor.

The protein resides in the cytoplasm. It catalyses the reaction tRNA(Lys) + L-lysine + ATP = L-lysyl-tRNA(Lys) + AMP + diphosphate. The chain is Lysine--tRNA ligase from Porphyromonas gingivalis (strain ATCC BAA-308 / W83).